Reading from the N-terminus, the 134-residue chain is Small ribosomal subunit protein uS9 (134 aa).

The segment at 114–134 is disordered; it reads EVERKKYGLKKARRAPQFSKR. Over residues 120–134 the composition is skewed to basic residues; that stretch reads YGLKKARRAPQFSKR.

The protein belongs to the universal ribosomal protein uS9 family.

The polypeptide is Small ribosomal subunit protein uS9 (Thermotoga neapolitana (strain ATCC 49049 / DSM 4359 / NBRC 107923 / NS-E)).